We begin with the raw amino-acid sequence, 186 residues long: Ribosome-recycling factor (186 aa).

The protein belongs to the RRF family.

The protein localises to the cytoplasm. Its function is as follows. Responsible for the release of ribosomes from messenger RNA at the termination of protein biosynthesis. May increase the efficiency of translation by recycling ribosomes from one round of translation to another. The protein is Ribosome-recycling factor of Bartonella bacilliformis (strain ATCC 35685 / KC583 / Herrer 020/F12,63).